The sequence spans 335 residues: Geranylgeranyl pyrophosphate synthase BTS1 (335 aa).

Residues lysine 36, arginine 39, and histidine 68 each contribute to the isopentenyl diphosphate site. Residues aspartate 75 and aspartate 79 each contribute to the Mg(2+) site. Dimethylallyl diphosphate is bound at residue arginine 84. Arginine 85 contributes to the isopentenyl diphosphate binding site. Dimethylallyl diphosphate is bound by residues lysine 169, threonine 170, glutamine 206, asparagine 213, lysine 223, and lysine 233.

The protein belongs to the FPP/GGPP synthase family. Requires Mg(2+) as cofactor.

It localises to the cytoplasm. The enzyme catalyses isopentenyl diphosphate + dimethylallyl diphosphate = (2E)-geranyl diphosphate + diphosphate. It carries out the reaction isopentenyl diphosphate + (2E)-geranyl diphosphate = (2E,6E)-farnesyl diphosphate + diphosphate. The catalysed reaction is isopentenyl diphosphate + (2E,6E)-farnesyl diphosphate = (2E,6E,10E)-geranylgeranyl diphosphate + diphosphate. It participates in isoprenoid biosynthesis; farnesyl diphosphate biosynthesis; farnesyl diphosphate from geranyl diphosphate and isopentenyl diphosphate: step 1/1. Its pathway is isoprenoid biosynthesis; geranyl diphosphate biosynthesis; geranyl diphosphate from dimethylallyl diphosphate and isopentenyl diphosphate: step 1/1. The protein operates within isoprenoid biosynthesis; geranylgeranyl diphosphate biosynthesis; geranylgeranyl diphosphate from farnesyl diphosphate and isopentenyl diphosphate: step 1/1. Functionally, catalyzes the trans-addition of the 3 molecules of IPP onto DMAPP to form geranylgeranyl pyrophosphate. Required for the membrane attachment of YPT1 and SEC4. May be involved in vesicle trafficking and protein sorting. The protein is Geranylgeranyl pyrophosphate synthase BTS1 (BTS1) of Saccharomyces cerevisiae (strain ATCC 204508 / S288c) (Baker's yeast).